A 204-amino-acid polypeptide reads, in one-letter code: FMN-dependent NADH:quinone oxidoreductase 1 (204 aa).

Residues Ser14, 20–22 (SMS), and 99–102 (MYNF) contribute to the FMN site.

This sequence belongs to the azoreductase type 1 family. In terms of assembly, homodimer. The cofactor is FMN.

The enzyme catalyses 2 a quinone + NADH + H(+) = 2 a 1,4-benzosemiquinone + NAD(+). It catalyses the reaction N,N-dimethyl-1,4-phenylenediamine + anthranilate + 2 NAD(+) = 2-(4-dimethylaminophenyl)diazenylbenzoate + 2 NADH + 2 H(+). Functionally, quinone reductase that provides resistance to thiol-specific stress caused by electrophilic quinones. In terms of biological role, also exhibits azoreductase activity. Catalyzes the reductive cleavage of the azo bond in aromatic azo compounds to the corresponding amines. This is FMN-dependent NADH:quinone oxidoreductase 1 from Hahella chejuensis (strain KCTC 2396).